An 80-amino-acid chain; its full sequence is Sulfur carrier protein TusA (80 aa).

The active-site Cysteine persulfide intermediate is Cys17.

The protein belongs to the sulfur carrier protein TusA family.

It is found in the cytoplasm. Functionally, sulfur carrier protein which probably makes part of a sulfur-relay system. This Pseudomonas putida (strain W619) protein is Sulfur carrier protein TusA.